The chain runs to 456 residues: General transcription factor IIE subunit 1 (456 aa).

Positions 11-100 (LDDLVKMVIR…LWYIDYKHII (90 aa)) constitute an HTH TFE/IIEalpha-type domain. Residues 129–157 (CQTCHKVYTALDIPKLLNMDTGALACEIC) form a C4-type zinc finger. The segment at 345–402 (ESAPDSGDADGNGSNSGSGGSTIEGNDGGNGEHQNKKMKLDDSQTVSSMSQSDDDGKD) is disordered. A compositionally biased stretch (low complexity) spans 347–357 (APDSGDADGNG). Gly residues predominate over residues 358 to 375 (SNSGSGGSTIEGNDGGNG). Residues 377 to 386 (HQNKKMKLDD) are compositionally biased toward basic and acidic residues.

Belongs to the TFIIE alpha subunit family. In terms of assembly, TFIIE is a tetramer of two alpha and two beta subunits.

It is found in the nucleus. Functionally, recruits TFIIH to the initiation complex and stimulates the RNA polymerase II C-terminal domain kinase and DNA-dependent ATPase activities of TFIIH. Both TFIIH and TFIIE are required for promoter clearance by RNA polymerase. The sequence is that of General transcription factor IIE subunit 1 (gtf2e1-1) from Dictyostelium discoideum (Social amoeba).